We begin with the raw amino-acid sequence, 250 residues long: Cell division protein ZapD (250 aa).

The protein belongs to the ZapD family. In terms of assembly, interacts with FtsZ.

It is found in the cytoplasm. In terms of biological role, cell division factor that enhances FtsZ-ring assembly. Directly interacts with FtsZ and promotes bundling of FtsZ protofilaments, with a reduction in FtsZ GTPase activity. In Yersinia pestis bv. Antiqua (strain Antiqua), this protein is Cell division protein ZapD.